Consider the following 505-residue polypeptide: Betaine aldehyde dehydrogenase (505 aa).

239–244 provides a ligand contact to NAD(+); sequence GSTATG. Glu261 acts as the Proton acceptor in catalysis. Cys296 acts as the Nucleophile in catalysis. A Microbody targeting signal motif is present at residues 503-505; that stretch reads SKL.

The protein belongs to the aldehyde dehydrogenase family. As to quaternary structure, homodimer.

Its subcellular location is the peroxisome. The enzyme catalyses betaine aldehyde + NAD(+) + H2O = glycine betaine + NADH + 2 H(+). It functions in the pathway amine and polyamine biosynthesis; betaine biosynthesis via choline pathway; betaine from betaine aldehyde: step 1/1. This Hordeum vulgare (Barley) protein is Betaine aldehyde dehydrogenase.